The sequence spans 106 residues: Nucleoid-associated protein DIP0260 (106 aa).

It belongs to the YbaB/EbfC family. In terms of assembly, homodimer.

It localises to the cytoplasm. The protein resides in the nucleoid. Binds to DNA and alters its conformation. May be involved in regulation of gene expression, nucleoid organization and DNA protection. The sequence is that of Nucleoid-associated protein DIP0260 from Corynebacterium diphtheriae (strain ATCC 700971 / NCTC 13129 / Biotype gravis).